The sequence spans 122 residues: N(2)-fixation sustaining protein CowN (122 aa).

It belongs to the CowN family.

In terms of biological role, is required to sustain N(2)-dependent growth in the presence of low levels of carbon monoxide (CO). Probably acts by protecting the N(2) fixation ability of the nitrogenase complex, which is inactivated in the presence of CO. The sequence is that of N(2)-fixation sustaining protein CowN from Azorhizobium caulinodans (strain ATCC 43989 / DSM 5975 / JCM 20966 / LMG 6465 / NBRC 14845 / NCIMB 13405 / ORS 571).